Consider the following 175-residue polypeptide: Zinc metalloproteinase-disintegrin-like catroriarin (175 aa).

One can recognise a Disintegrin domain in the interval 1 to 63; it reads NPCCDAATCK…ECPADVFHKN (63 aa). Cystine bridges form between cysteine 3-cysteine 26, cysteine 17-cysteine 23, cysteine 22-cysteine 48, cysteine 35-cysteine 55, cysteine 42-cysteine 74, cysteine 67-cysteine 79, cysteine 101-cysteine 147, cysteine 114-cysteine 124, and cysteine 131-cysteine 171. The D/ECD-tripeptide motif lies at 41–43; it reads ECD. Ca(2+) contacts are provided by aspartate 43, proline 44, glutamate 46, aspartate 58, and valine 59.

Belongs to the venom metalloproteinase (M12B) family. P-III subfamily. P-IIIa sub-subfamily. In terms of assembly, monomer. Zn(2+) is required as a cofactor. Glycosylated. As to expression, expressed by the venom gland.

Its subcellular location is the secreted. In terms of biological role, snake venom metalloproteinase that impairs hemostasis in the envenomed animal. This Crotalus atrox (Western diamondback rattlesnake) protein is Zinc metalloproteinase-disintegrin-like catroriarin.